Reading from the N-terminus, the 1085-residue chain is DNA mismatch repair protein MutS (1085 aa).

Residues 533 to 564 (DEDLFGEEEQNAPPVGSSNHAVGTQPSADDEA) are disordered. A compositionally biased stretch (polar residues) spans 548-559 (GSSNHAVGTQPS). 812–819 (GPNMSGKS) is a binding site for ATP. The interval 997-1042 (ERRAPRSAPPTVPARGDDRRSAGRASSSGAGAARGEQGRTLPDGQL) is disordered. Over residues 1019–1031 (GRASSSGAGAARG) the composition is skewed to low complexity.

The protein belongs to the DNA mismatch repair MutS family.

Its function is as follows. This protein is involved in the repair of mismatches in DNA. It is possible that it carries out the mismatch recognition step. This protein has a weak ATPase activity. The protein is DNA mismatch repair protein MutS of Roseiflexus sp. (strain RS-1).